The sequence spans 89 residues: Putative ankyrin repeat protein RF_1157 (89 aa).

One copy of the ANK repeat lies at 2 to 32 (YNTTPLNFAINQENNEEVIKYLLANGANPRL).

The protein is Putative ankyrin repeat protein RF_1157 of Rickettsia felis (strain ATCC VR-1525 / URRWXCal2) (Rickettsia azadi).